Consider the following 387-residue polypeptide: Monopolar spindle protein 2 (387 aa).

A coiled-coil region spans residues 157–269; it reads KNIGKALEVQ…FLKDQIRRER (113 aa). The tract at residues 216–235 is disordered; that stretch reads RQVEDNQNSSRTSDPGSPLV. Positions 220–230 are enriched in polar residues; that stretch reads DNQNSSRTSDP. A helical transmembrane segment spans residues 311–327; that stretch reads IRIIVCFALLAGVLPYI.

It belongs to the MPS2 family. Interacts with BBP1, MPS3, and SPC24.

The protein resides in the nucleus membrane. The protein localises to the cytoplasm. It is found in the cytoskeleton. Its subcellular location is the microtubule organizing center. It localises to the spindle pole body. Component of the spindle pole body (SPB) required for insertion of the nascent SPB into the nuclear envelope and for the proper execution of spindle pole body (SPB) duplication. This Saccharomyces cerevisiae (strain FostersB) (Baker's yeast) protein is Monopolar spindle protein 2 (MPS2).